A 172-amino-acid chain; its full sequence is MAKMQAKVQQDERDDGLREKMISVNRVTKVVKGGRILGFAALTVVGDGDGRIGMGKGKAKEVPVAVQKAMDEARRKMVKVALKNGTLQHEVVGRHGAAKVLMMPAKEGTGVIAGGPMRAIFEVMGVTNVVTKSHGSTNPYNMVRATLDGLTKMSTPAEIAAKRGKSVEDILG.

The region spanning 17-80 (LREKMISVNR…DEARRKMVKV (64 aa)) is the S5 DRBM domain.

This sequence belongs to the universal ribosomal protein uS5 family. In terms of assembly, part of the 30S ribosomal subunit. Contacts proteins S4 and S8.

Its function is as follows. With S4 and S12 plays an important role in translational accuracy. Located at the back of the 30S subunit body where it stabilizes the conformation of the head with respect to the body. The protein is Small ribosomal subunit protein uS5 of Cupriavidus metallidurans (strain ATCC 43123 / DSM 2839 / NBRC 102507 / CH34) (Ralstonia metallidurans).